We begin with the raw amino-acid sequence, 334 residues long: F-box protein AUF1 (334 aa).

The 49-residue stretch at 1–49 folds into the F-box domain; it reads MDAFDAIPDPVVIDILNRVGDVKTLIRCRSVSKRFNSLATQSESLLLQL.

Part of a SCF (ASK-cullin-F-box) protein ligase complex. Interacts with SKP1A/ASK1, SKP1B/ASK2, ASK11 and ASK13.

It is found in the nucleus. The protein operates within protein modification; protein ubiquitination. Its function is as follows. Component of SCF(ASK-cullin-F-box) E3 ubiquitin ligase complexes, which may mediate the ubiquitination and subsequent proteasomal degradation of target proteins. Involved in the control of basipetal and acropetal auxin transport by promoting the distribution and expression of the auxin transporter PIN2. Promotes cytokinin-mediated cell expansion in the root elongation and differentiation zone, without affecting root cell division. The protein is F-box protein AUF1 of Arabidopsis thaliana (Mouse-ear cress).